We begin with the raw amino-acid sequence, 272 residues long: MRYIIILAVLFINSIHAKITSYKFESVNFDSKIEWTGDGLYNISLKNYGIKTWQTMYTNVPEGTYDISAFPKNDFVSFWVKFEQGDYKVEEYCTGLCVEVKIGPPTVTLTEYDDHINLYIEHPYATRGSKKIPIYKRGDMCDIYLLYTANFTFGDSKEPVPYDIDDYDCTSTGCSIDFVTTEKVCVTAQGATEGFLEKITPWSSKVCLTPKKSVYTCAIRSKEDVPNFKDKMARVIKRKFNKQSQSYLTKFLGSTSNDVTTFLSMLNLTKYS.

The first 13 residues, 1 to 13 (MRYIIILAVLFIN), serve as a signal peptide directing secretion. Residues Asn42, Asn150, and Asn267 are each glycosylated (N-linked (GlcNAc...) asparagine; by host).

It belongs to the type II cytokine receptor family. Homodimer. Interacts with host IFNG.

It is found in the secreted. Functionally, counteracts the antiviral effects of host IFN-gamma. Acts as a soluble IFN-gamma receptor and thus inhibits the interaction between host IFN-gamma and its receptor. The protein is Soluble interferon gamma receptor OPG193 (OPG193) of Bos taurus (Bovine).